Reading from the N-terminus, the 253-residue chain is 5'/3'-nucleotidase SurE (253 aa).

Positions 8, 9, 39, and 92 each coordinate a divalent metal cation.

Belongs to the SurE nucleotidase family. The cofactor is a divalent metal cation.

Its subcellular location is the cytoplasm. The enzyme catalyses a ribonucleoside 5'-phosphate + H2O = a ribonucleoside + phosphate. The catalysed reaction is a ribonucleoside 3'-phosphate + H2O = a ribonucleoside + phosphate. It catalyses the reaction [phosphate](n) + H2O = [phosphate](n-1) + phosphate + H(+). Its function is as follows. Nucleotidase with a broad substrate specificity as it can dephosphorylate various ribo- and deoxyribonucleoside 5'-monophosphates and ribonucleoside 3'-monophosphates with highest affinity to 3'-AMP. Also hydrolyzes polyphosphate (exopolyphosphatase activity) with the preference for short-chain-length substrates (P20-25). Might be involved in the regulation of dNTP and NTP pools, and in the turnover of 3'-mononucleotides produced by numerous intracellular RNases (T1, T2, and F) during the degradation of various RNAs. The chain is 5'/3'-nucleotidase SurE from Citrobacter koseri (strain ATCC BAA-895 / CDC 4225-83 / SGSC4696).